Here is a 446-residue protein sequence, read N- to C-terminus: Saccharopine dehydrogenase [NADP(+), L-glutamate-forming] (446 aa).

Residues 10–13 (SGFV), 33–35 (CRT), 54–55 (DV), I75, 97–98 (SS), 124–126 (LDP), and S174 contribute to the NADP(+) site. Residues 98 to 99 (SY) and D125 each bind L-saccharopine. Residues R223 and 244 to 246 (TLR) each bind L-saccharopine.

This sequence belongs to the saccharopine dehydrogenase family. As to quaternary structure, interacts with TRM112.

The enzyme catalyses L-saccharopine + NADP(+) + H2O = (S)-2-amino-6-oxohexanoate + L-glutamate + NADPH + H(+). It participates in amino-acid biosynthesis; L-lysine biosynthesis via AAA pathway; L-lysine from L-alpha-aminoadipate (fungal route): step 2/3. This chain is Saccharopine dehydrogenase [NADP(+), L-glutamate-forming] (LYS9), found in Saccharomyces cerevisiae (strain ATCC 204508 / S288c) (Baker's yeast).